The chain runs to 292 residues: Ribosomal RNA small subunit methyltransferase A (292 aa).

Positions 29, 31, 56, 77, 102, and 127 each coordinate S-adenosyl-L-methionine.

Belongs to the class I-like SAM-binding methyltransferase superfamily. rRNA adenine N(6)-methyltransferase family. RsmA subfamily.

It localises to the cytoplasm. It catalyses the reaction adenosine(1518)/adenosine(1519) in 16S rRNA + 4 S-adenosyl-L-methionine = N(6)-dimethyladenosine(1518)/N(6)-dimethyladenosine(1519) in 16S rRNA + 4 S-adenosyl-L-homocysteine + 4 H(+). Its function is as follows. Specifically dimethylates two adjacent adenosines (A1518 and A1519) in the loop of a conserved hairpin near the 3'-end of 16S rRNA in the 30S particle. May play a critical role in biogenesis of 30S subunits. This Bacillus licheniformis (strain ATCC 14580 / DSM 13 / JCM 2505 / CCUG 7422 / NBRC 12200 / NCIMB 9375 / NCTC 10341 / NRRL NRS-1264 / Gibson 46) protein is Ribosomal RNA small subunit methyltransferase A.